Reading from the N-terminus, the 618-residue chain is Origin recognition complex subunit 2 (618 aa).

Disordered stretches follow at residues 1 to 116 (MSAS…AAKD) and 149 to 274 (NATP…KKSN). At T24 the chain carries Phosphothreonine. Phosphoserine occurs at positions 26 and 30. Basic residues predominate over residues 49 to 59 (TSRRSTRRPSP). Positions 70 to 79 (SNGKGQEERI) are enriched in basic and acidic residues. Phosphoserine occurs at positions 87, 91, and 92. Residues 94–107 (AEDQEEEESIEESE) show a composition bias toward acidic residues. T151, T154, T157, T160, T167, T170, and T181 each carry phosphothreonine. A compositionally biased stretch (low complexity) spans 151-161 (TPCTPKTPKTP). The span at 183–193 (AHVRTRVKKQI) shows a compositional bias: basic residues. Positions 199-208 (DSDEDFSGDE) are enriched in acidic residues. Residues 219-233 (SSSSSSSDAGNSSDN) show a composition bias toward low complexity. T258 carries the phosphothreonine modification. Phosphoserine is present on S260.

It belongs to the ORC2 family. ORC is composed of six subunits. Interacts with Mcm10. Interacts with CG9890. Interaction between the TREX-2/AMEX complex and the ORC complex is required for ORC localization to mRNPs, and consequently mRNA export.

The protein localises to the nucleus. It is found in the chromosome. It localises to the centromere. Functionally, component of the origin recognition complex (ORC) that binds origins of replication. DNA-binding is ATP-dependent, however specific DNA sequences that define origins of replication have not been identified so far. ORC is required to assemble the pre-replication complex necessary to initiate DNA replication. As part of the ORC complex, might also have a role in mRNA export. This Drosophila melanogaster (Fruit fly) protein is Origin recognition complex subunit 2 (Orc2).